Reading from the N-terminus, the 221-residue chain is NEDD4 family-interacting protein 1 (221 aa).

Residue alanine 2 is modified to N-acetylalanine. The tract at residues 2–41 (ALALAALAAVEPACGSRYQQLQNEEESGEPEQAAGDAPPP) is interaction with UBE2L3. At 2–116 (ALALAALAAV…ADQLRIGNDG (115 aa)) the chain is on the cytoplasmic side. Residues 18–45 (RYQQLQNEEESGEPEQAAGDAPPPYSSI) form a disordered region. 3 consecutive short sequence motifs (PPxY motif) follow at residues 39–42 (PPPY), 64–67 (PPSY), and 74–76 (PSY). Residues 42-76 (YSSISAESAAYFDYKDESGFPKPPSYNVATTLPSY) form an interaction with ITCH region. The chain crosses the membrane as a helical span at residues 117-137 (IFMLTFFMAFLFNWIGFFLSF). Residues 138–143 (CLTTSA) are Extracellular-facing. Residues 144–164 (AGRYGAISGFGLSLIKWILIV) traverse the membrane as a helical segment. At 165–172 (RFSTYFPG) the chain is on the cytoplasmic side. A helical transmembrane segment spans residues 173-193 (YFDGQYWLWWVFLVLGFLLFL). Residues 194–221 (RGFINYAKVRKMPETFSNLPRTRVLFIY) lie on the Extracellular side of the membrane.

In terms of assembly, forms heterodimers with NDFIP2. Interacts with several E3 ubiquitin-protein ligases, including ITCH, NEDD4, NEDD4L and WWP2. The interaction with NEDD4, NEDD4L and ITCH leads to relocalization of these proteins to exosomes and eventually to exosomal secretion. Interacts with U2SURP. Interacts with SLC11A2/DMT1. Interacts with PTEN. May interact with phosphorylated EGFR. Interacts with BRAT1. Interacts with KCNH2. Interacts with MAVS. Part of a complex containing ITCH, NDFIP1 and MAP3K7. Interacts (via N-terminus) with UBE2L3; the interaction mediates recruitment of UBE2L3 to ITCH. Post-translationally, ubiquitinated by NEDD4 and ITCH; mono-, di- and polyubiquitinated forms are detected. Ubiquitination regulates its degradation. In terms of processing, undergoes transient tyrosine phosphorylation following EGF stimulation, most probably by catalyzed by SRC. Phosphorylation SRC is enhanced in the presence of NDFIP2 which may act as a scaffold to recruit SRC to NDFIP1. As to expression, widely expressed. Higher levels are detected in cerebellum, pituitary, thalamus, kidney, liver, testis, salivary glands and placenta. Also expressed in fetal brain, kidney and lung.

It localises to the endosome membrane. It is found in the golgi apparatus membrane. Its subcellular location is the synapse. The protein resides in the synaptosome. The protein localises to the cell projection. It localises to the dendrite. It is found in the secreted. Activates HECT domain-containing E3 ubiquitin-protein ligases, including NEDD4 and ITCH, and consequently modulates the stability of their targets. As a result, controls many cellular processes. Prevents chronic T-helper cell-mediated inflammation by activating ITCH and thus controlling JUNB degradation. Promotes pancreatic beta cell death through degradation of JUNB and inhibition of the unfolded protein response, leading to reduction of insulin secretion. Restricts the production of pro-inflammatory cytokines in effector Th17 T-cells by promoting ITCH-mediated ubiquitination and degradation of RORC. Together with NDFIP2, limits the cytokine signaling and expansion of effector Th2 T-cells by promoting degradation of JAK1, probably by ITCH- and NEDD4L-mediated ubiquitination. Regulates peripheral T-cell tolerance to self and foreign antigens, forcing the exit of naive CD4+ T-cells from the cell cycle before they become effector T-cells. Negatively regulates RLR-mediated antiviral response by promoting SMURF1-mediated ubiquitination and subsequent degradation of MAVS. Negatively regulates KCNH2 potassium channel activity by decreasing its cell-surface expression and interfering with channel maturation through recruitment of NEDD4L to the Golgi apparatus where it mediates KCNH2 degradation. In cortical neurons, mediates the ubiquitination of the divalent metal transporter SLC11A2/DMT1 by NEDD4L, leading to its down-regulation and protection of the cells from cobalt and iron toxicity. Important for normal development of dendrites and dendritic spines in cortex. Enhances the ubiquitination of BRAT1 mediated by: NEDD4, NEDD4L and ITCH and is required for the nuclear localization of ubiquitinated BRAT1. Enhances the ITCH-mediated ubiquitination of MAP3K7 by recruiting E2 ubiquitin-conjugating enzyme UBE2L3 to ITCH. Modulates EGFR signaling through multiple pathways. In particular, may regulate the ratio of AKT1-to-MAPK8 signaling in response to EGF, acting on AKT1 probably through PTEN destabilization and on MAPK8 through ITCH-dependent MAP2K4 inactivation. As a result, may control cell growth rate. Inhibits cell proliferation by promoting PTEN nuclear localization and changing its signaling specificity. This chain is NEDD4 family-interacting protein 1 (NDFIP1), found in Homo sapiens (Human).